The primary structure comprises 122 residues: Large ribosomal subunit protein uL14 (122 aa).

Belongs to the universal ribosomal protein uL14 family. As to quaternary structure, part of the 50S ribosomal subunit. Forms a cluster with proteins L3 and L19. In the 70S ribosome, L14 and L19 interact and together make contacts with the 16S rRNA in bridges B5 and B8.

Binds to 23S rRNA. Forms part of two intersubunit bridges in the 70S ribosome. The sequence is that of Large ribosomal subunit protein uL14 from Lacticaseibacillus casei (strain BL23) (Lactobacillus casei).